Reading from the N-terminus, the 245-residue chain is 1-(5-phosphoribosyl)-5-[(5-phosphoribosylamino)methylideneamino] imidazole-4-carboxamide isomerase (245 aa).

The Proton acceptor role is filled by Asp-8. The Proton donor role is filled by Asp-129.

Belongs to the HisA/HisF family.

It localises to the cytoplasm. It carries out the reaction 1-(5-phospho-beta-D-ribosyl)-5-[(5-phospho-beta-D-ribosylamino)methylideneamino]imidazole-4-carboxamide = 5-[(5-phospho-1-deoxy-D-ribulos-1-ylimino)methylamino]-1-(5-phospho-beta-D-ribosyl)imidazole-4-carboxamide. The protein operates within amino-acid biosynthesis; L-histidine biosynthesis; L-histidine from 5-phospho-alpha-D-ribose 1-diphosphate: step 4/9. The sequence is that of 1-(5-phosphoribosyl)-5-[(5-phosphoribosylamino)methylideneamino] imidazole-4-carboxamide isomerase from Rhodopseudomonas palustris (strain ATCC BAA-98 / CGA009).